A 195-amino-acid chain; its full sequence is Shikimate kinase (195 aa).

Residue 21-26 participates in ATP binding; sequence GTGKTS. Residue Thr-25 participates in Mg(2+) binding. Substrate is bound by residues Asp-43, Arg-67, and Gly-89. The segment at 128–148 is disordered; that stretch reads REQRPSFSGKASTEISEETMR. Arg-131 is an ATP binding site. Residues 132 to 141 are compositionally biased toward polar residues; it reads PSFSGKASTE. Residue Arg-158 coordinates substrate.

This sequence belongs to the shikimate kinase family. Monomer. Mg(2+) serves as cofactor.

Its subcellular location is the cytoplasm. It carries out the reaction shikimate + ATP = 3-phosphoshikimate + ADP + H(+). It functions in the pathway metabolic intermediate biosynthesis; chorismate biosynthesis; chorismate from D-erythrose 4-phosphate and phosphoenolpyruvate: step 5/7. Its function is as follows. Catalyzes the specific phosphorylation of the 3-hydroxyl group of shikimic acid using ATP as a cosubstrate. This chain is Shikimate kinase, found in Syntrophus aciditrophicus (strain SB).